The primary structure comprises 267 residues: Putative transcription factor Ovo-like 1 (267 aa).

4 consecutive C2H2-type zinc fingers follow at residues 118-140 (FTCR…MKCH), 146-168 (HLCT…VRTH), 174-197 (YKCS…KKIH), and 213-235 (YVCE…LKEH).

In terms of tissue distribution, expressed in fetal kidney, and also in adult pancreas and placenta. Not expressed in intestine, peripheral blood lymphocytes and ovary.

Its subcellular location is the nucleus. Functionally, putative transcription factor. Involved in hair formation and spermatogenesis. May function in the differentiation and/or maintenance of the urogenital system. The sequence is that of Putative transcription factor Ovo-like 1 (OVOL1) from Homo sapiens (Human).